The chain runs to 210 residues: 3-phospho-D-glycerate guanylyltransferase (210 aa).

The protein belongs to the CofC family.

The enzyme catalyses (2R)-3-phosphoglycerate + GTP + H(+) = 3-[(R)-glyceryl]-diphospho-5'-guanosine + diphosphate. It participates in cofactor biosynthesis; coenzyme F420 biosynthesis. Functionally, guanylyltransferase that catalyzes the activation of (2R)-3-phosphoglycerate (3PG) as 3-[(R)-glyceryl]-diphospho-5'-guanosine, via the condensation of 3PG with GTP. It is involved in the biosynthesis of a derivative of the hydride carrier cofactor coenzyme F420, 3PG-F420. The protein is 3-phospho-D-glycerate guanylyltransferase of Colwellia psychrerythraea (strain 34H / ATCC BAA-681) (Vibrio psychroerythus).